Consider the following 386-residue polypeptide: MFKKTKITILGATGSIGDSTLAVIRETNDFEVFALTAFSNVEKLAELCQEFKPKFAVVPDLSKKQKLQSLVTDVEVLVGESGLEKVSSLAEIDIVMSAIVGIAGLKPTFAAAKAGKKILLANKESLVTAGHLLIDEVVKNNAQLIPVDSEHNAIFQCIDNHDKKCLPEIDKIILTASGGPFRDKQQLHELTDVTPEQACNHPNWQMGRKISVDSSTMVNKALEVIEAYWLFSVSADKIGVLIHPQSVTHSIVRYVDGSYIAQLGVPDMKTPIANAMYYPKRGSVNVESLDFTKYQLTFREACFERFEALKIVFNNLQNKNYAANIVFNAANEELVAAFLNKKIKYLEIIEVNKKVTKELNFENPKNIEEVFEIDRKTREYVDSVLG.

The NADPH site is built by T13, G14, S15, I16, N40, and N122. K123 contacts 1-deoxy-D-xylulose 5-phosphate. E124 lines the NADPH pocket. D148 contacts Mn(2+). Positions 149, 150, 177, and 201 each coordinate 1-deoxy-D-xylulose 5-phosphate. Position 150 (E150) interacts with Mn(2+). G207 is an NADPH binding site. 1-deoxy-D-xylulose 5-phosphate contacts are provided by S214, N219, K220, and E223. E223 is a binding site for Mn(2+).

The protein belongs to the DXR family. It depends on Mg(2+) as a cofactor. Mn(2+) is required as a cofactor.

The enzyme catalyses 2-C-methyl-D-erythritol 4-phosphate + NADP(+) = 1-deoxy-D-xylulose 5-phosphate + NADPH + H(+). It participates in isoprenoid biosynthesis; isopentenyl diphosphate biosynthesis via DXP pathway; isopentenyl diphosphate from 1-deoxy-D-xylulose 5-phosphate: step 1/6. Functionally, catalyzes the NADPH-dependent rearrangement and reduction of 1-deoxy-D-xylulose-5-phosphate (DXP) to 2-C-methyl-D-erythritol 4-phosphate (MEP). In Francisella tularensis subsp. holarctica (strain OSU18), this protein is 1-deoxy-D-xylulose 5-phosphate reductoisomerase.